The following is a 202-amino-acid chain: Endothelin-1 (202 aa).

The signal sequence occupies residues 1-25; it reads MDYFPVIFSLLFVAFQGAPETAVLG. Residues 26-50 constitute a propeptide that is removed on maturation; it reads AELSPRAEKEVQSPPPSTSWRPRRS. The disordered stretch occupies residues 28 to 47; sequence LSPRAEKEVQSPPPSTSWRP. 2 disulfides stabilise this stretch: C53/C67 and C55/C63. Residues 74-202 constitute a propeptide that is removed on maturation; it reads VNTPERVVPY…DQKLIHNRAH (129 aa). The tract at residues 110 to 124 is endothelin-like; that stretch reads CQCAHQKDKKCWNFC.

It belongs to the endothelin/sarafotoxin family.

Its subcellular location is the secreted. Endothelins are endothelium-derived vasoconstrictor peptides. Probable ligand for G-protein coupled receptors EDNRA and EDNRB which activates PTK2B, BCAR1, BCAR3 and, GTPases RAP1 and RHOA cascade in glomerular mesangial cells. Also binds the DEAR/FBXW7-AS1 receptor. Promotes mesenteric arterial wall remodeling via activation of ROCK signaling and subsequent colocalization of NFATC3 with F-actin filaments. NFATC3 then translocates to the nucleus where it subsequently promotes the transcription of the smooth muscle hypertrophy and differentiation marker ACTA2. The chain is Endothelin-1 (Edn1) from Rattus norvegicus (Rat).